The primary structure comprises 142 residues: Interleukin-3 (142 aa).

The signal sequence occupies residues Met1–Gln18. Asn33 is a glycosylation site (N-linked (GlcNAc...) asparagine). An intrachain disulfide couples Cys34 to Cys102.

This sequence belongs to the IL-3 family. As to quaternary structure, monomer. Activated T-cells, mast cells, natural killer cells.

It localises to the secreted. In terms of biological role, granulocyte/macrophage colony-stimulating factors are cytokines that act in hematopoiesis by controlling the production, differentiation, and function of 2 related white cell populations of the blood, the granulocytes and the monocytes-macrophages. Its function is as follows. This CSF induces granulocytes, macrophages, mast cells, stem cells, erythroid cells, eosinophils and megakaryocytes. This chain is Interleukin-3 (IL3), found in Callithrix jacchus (White-tufted-ear marmoset).